Reading from the N-terminus, the 231-residue chain is 5'-methylthioadenosine/S-adenosylhomocysteine nucleosidase (231 aa).

The Proton acceptor role is filled by Glu12. Residues Gly78, Val153, and 174 to 175 (ME) each bind substrate. Asp198 serves as the catalytic Proton donor.

The protein belongs to the PNP/UDP phosphorylase family. MtnN subfamily.

It carries out the reaction S-adenosyl-L-homocysteine + H2O = S-(5-deoxy-D-ribos-5-yl)-L-homocysteine + adenine. The catalysed reaction is S-methyl-5'-thioadenosine + H2O = 5-(methylsulfanyl)-D-ribose + adenine. The enzyme catalyses 5'-deoxyadenosine + H2O = 5-deoxy-D-ribose + adenine. The protein operates within amino-acid biosynthesis; L-methionine biosynthesis via salvage pathway; S-methyl-5-thio-alpha-D-ribose 1-phosphate from S-methyl-5'-thioadenosine (hydrolase route): step 1/2. Functionally, catalyzes the irreversible cleavage of the glycosidic bond in both 5'-methylthioadenosine (MTA) and S-adenosylhomocysteine (SAH/AdoHcy) to adenine and the corresponding thioribose, 5'-methylthioribose and S-ribosylhomocysteine, respectively. Also cleaves 5'-deoxyadenosine, a toxic by-product of radical S-adenosylmethionine (SAM) enzymes, into 5-deoxyribose and adenine. The protein is 5'-methylthioadenosine/S-adenosylhomocysteine nucleosidase of Vibrio vulnificus (strain CMCP6).